The following is a 338-amino-acid chain: 4-hydroxythreonine-4-phosphate dehydrogenase (338 aa).

Positions 140 and 141 each coordinate substrate. Residues H172, H217, and H271 each coordinate a divalent metal cation. Substrate is bound by residues K279, N288, and R297.

It belongs to the PdxA family. Homodimer. A divalent metal cation serves as cofactor.

The protein localises to the cytoplasm. The enzyme catalyses 4-(phosphooxy)-L-threonine + NAD(+) = 3-amino-2-oxopropyl phosphate + CO2 + NADH. The protein operates within cofactor biosynthesis; pyridoxine 5'-phosphate biosynthesis; pyridoxine 5'-phosphate from D-erythrose 4-phosphate: step 4/5. Catalyzes the NAD(P)-dependent oxidation of 4-(phosphooxy)-L-threonine (HTP) into 2-amino-3-oxo-4-(phosphooxy)butyric acid which spontaneously decarboxylates to form 3-amino-2-oxopropyl phosphate (AHAP). This Prosthecochloris aestuarii (strain DSM 271 / SK 413) protein is 4-hydroxythreonine-4-phosphate dehydrogenase.